A 368-amino-acid chain; its full sequence is Putative phospho-2-dehydro-3-deoxyheptonate aldolase (368 aa).

Belongs to the class-I DAHP synthase family.

The enzyme catalyses D-erythrose 4-phosphate + phosphoenolpyruvate + H2O = 7-phospho-2-dehydro-3-deoxy-D-arabino-heptonate + phosphate. It functions in the pathway metabolic intermediate biosynthesis; chorismate biosynthesis; chorismate from D-erythrose 4-phosphate and phosphoenolpyruvate: step 1/7. Its function is as follows. Stereospecific condensation of phosphoenolpyruvate (PEP) and D-erythrose-4-phosphate (E4P) giving rise to 3-deoxy-D-arabino-heptulosonate-7-phosphate (DAHP). This is Putative phospho-2-dehydro-3-deoxyheptonate aldolase from Schizosaccharomyces pombe (strain 972 / ATCC 24843) (Fission yeast).